Here is a 778-residue protein sequence, read N- to C-terminus: Phenylalanine--tRNA ligase beta subunit (778 aa).

In terms of domain architecture, tRNA-binding spans 39-150 (YEVPQKIVFG…GKYKIGEEVS (112 aa)). Residues 391–467 (HEDKIISLNK…RLVGIDNIPS (77 aa)) form the B5 domain. 4 residues coordinate Mg(2+): Asp-445, Asp-451, Glu-454, and Glu-455. Residues 686–778 (SKYQASFRDL…LKNQLGVGIR (93 aa)) form the FDX-ACB domain.

It belongs to the phenylalanyl-tRNA synthetase beta subunit family. Type 1 subfamily. In terms of assembly, tetramer of two alpha and two beta subunits. Requires Mg(2+) as cofactor.

It localises to the cytoplasm. It catalyses the reaction tRNA(Phe) + L-phenylalanine + ATP = L-phenylalanyl-tRNA(Phe) + AMP + diphosphate + H(+). The polypeptide is Phenylalanine--tRNA ligase beta subunit (Sulfurimonas denitrificans (strain ATCC 33889 / DSM 1251) (Thiomicrospira denitrificans (strain ATCC 33889 / DSM 1251))).